A 198-amino-acid polypeptide reads, in one-letter code: Peptidyl-tRNA hydrolase (198 aa).

Tyr15 is a tRNA binding site. His20 functions as the Proton acceptor in the catalytic mechanism. 3 residues coordinate tRNA: Phe66, Asn68, and Asn114.

It belongs to the PTH family. Monomer.

Its subcellular location is the cytoplasm. It catalyses the reaction an N-acyl-L-alpha-aminoacyl-tRNA + H2O = an N-acyl-L-amino acid + a tRNA + H(+). Functionally, hydrolyzes ribosome-free peptidyl-tRNAs (with 1 or more amino acids incorporated), which drop off the ribosome during protein synthesis, or as a result of ribosome stalling. Its function is as follows. Catalyzes the release of premature peptidyl moieties from peptidyl-tRNA molecules trapped in stalled 50S ribosomal subunits, and thus maintains levels of free tRNAs and 50S ribosomes. The chain is Peptidyl-tRNA hydrolase from Cupriavidus metallidurans (strain ATCC 43123 / DSM 2839 / NBRC 102507 / CH34) (Ralstonia metallidurans).